Here is a 459-residue protein sequence, read N- to C-terminus: Argininosuccinate lyase (459 aa).

Belongs to the lyase 1 family. Argininosuccinate lyase subfamily.

It is found in the cytoplasm. It catalyses the reaction 2-(N(omega)-L-arginino)succinate = fumarate + L-arginine. It functions in the pathway amino-acid biosynthesis; L-arginine biosynthesis; L-arginine from L-ornithine and carbamoyl phosphate: step 3/3. This Geobacillus kaustophilus (strain HTA426) protein is Argininosuccinate lyase.